A 430-amino-acid polypeptide reads, in one-letter code: Ribosomal protein uS12 methylthiotransferase RimO (430 aa).

The 116-residue stretch at 1–116 (MRVGIKVLGC…IANAIENGTD (116 aa)) folds into the MTTase N-terminal domain. [4Fe-4S] cluster contacts are provided by Cys-10, Cys-46, Cys-79, Cys-148, Cys-152, and Cys-155. The Radical SAM core domain occupies 134–365 (LEERPYAYVK…LLQAEISNSR (232 aa)). The TRAM domain occupies 367–430 (DRFVGKKLKF…DEYDMWGSVI (64 aa)).

Belongs to the methylthiotransferase family. RimO subfamily. Requires [4Fe-4S] cluster as cofactor.

The protein localises to the cytoplasm. The catalysed reaction is L-aspartate(89)-[ribosomal protein uS12]-hydrogen + (sulfur carrier)-SH + AH2 + 2 S-adenosyl-L-methionine = 3-methylsulfanyl-L-aspartate(89)-[ribosomal protein uS12]-hydrogen + (sulfur carrier)-H + 5'-deoxyadenosine + L-methionine + A + S-adenosyl-L-homocysteine + 2 H(+). Functionally, catalyzes the methylthiolation of an aspartic acid residue of ribosomal protein uS12. This is Ribosomal protein uS12 methylthiotransferase RimO from Thermotoga petrophila (strain ATCC BAA-488 / DSM 13995 / JCM 10881 / RKU-1).